The following is a 547-amino-acid chain: MRQKRKGDLSPAELMMLTIGDVIKQLIEAHEQGKDIDLNKVKTKTAAKYGLSAQPRLVDIIAAVPPQYRKVLMPKLKAKPIRTASGIAVVAVMCKPHRCPHISFTGNICVYCPGGPDSDFEYSTQSYTGYEPTSMRAIRARYDPFLQTRHRIEQLKQLGHSVDKVEFIVMGGTFMALPEEYRDYFIRNLHDALSGHTSNNIYEAVKYSERSLTKCIGITIETRPDYCMKRHLSDMLTYGCTRLEIGVQSVYEDVARDTNRGHTVKAVCESFHLAKDSGFKVVAHMMPDLPNVGLERDIEQFTEFFENPAFRPDGLKLYPTLVIRGTGLYELWKSGRYKSYSPSDLVELVARILALVPPWTRVYRVQRDIPMPLVSSGVEHGNLRELALARMKDLGIQCRDVRTREVGIQEIHHKVRPYQVELVRRDYVANGGWETFLSYEDPDQDILIGLLRLRKCSEETFRFELGGGVSIVRELHVYGSVVPVSSRDPTKFQHQGFGMLLMEEAERIAREEHGSGKIAVISGVGTRNYYRKIGYRLQGPYMVKMLK.

Positions arginine 82 to proline 372 constitute a Radical SAM core domain. [4Fe-4S] cluster contacts are provided by cysteine 99, cysteine 109, and cysteine 112. Serine 161 is modified (phosphoserine). Acetyl-CoA is bound at residue lysine 164. Tyrosine 202 bears the Phosphotyrosine; by ALK mark. An N6-methyllysine modification is found at lysine 229. The residue at position 251 (tyrosine 251) is a Phosphotyrosine. In terms of domain architecture, N-acetyltransferase spans isoleucine 396–lysine 547. Acetyl-CoA is bound by residues glutamate 474 to valine 477, phenylalanine 497 to methionine 499, and tyrosine 530.

This sequence belongs to the ELP3 family. In terms of assembly, component of the elongator complex which consists of ELP1, ELP2, ELP3, ELP4, ELP5 and ELP6. ELP1, ELP2 and ELP3 form the elongator core complex. Interacts with alpha-tubulin. [4Fe-4S] cluster is required as a cofactor. In terms of processing, tyrosine-phosphorylated; phosphorylation on Tyr-202 does not affect elongator complex integrity or ELP3 protein stability. Also serine/threonine-phosphorylated. Expressed in the cerebellum and spinal motor neurons.

The protein localises to the cytoplasm. It is found in the nucleus. The catalysed reaction is uridine(34) in tRNA + acetyl-CoA + S-adenosyl-L-methionine + H2O = 5-(carboxymethyl)uridine(34) in tRNA + 5'-deoxyadenosine + L-methionine + CoA + 2 H(+). The protein operates within tRNA modification; 5-methoxycarbonylmethyl-2-thiouridine-tRNA biosynthesis. Its function is as follows. Catalytic tRNA acetyltransferase subunit of the elongator complex which is required for multiple tRNA modifications, including mcm5U (5-methoxycarbonylmethyl uridine), mcm5s2U (5-methoxycarbonylmethyl-2-thiouridine), and ncm5U (5-carbamoylmethyl uridine). In the elongator complex, acts as a tRNA uridine(34) acetyltransferase by mediating formation of carboxymethyluridine in the wobble base at position 34 in tRNAs. May also act as a protein lysine acetyltransferase by mediating acetylation of target proteins; such activity is however unclear in vivo and recent evidences suggest that ELP3 primarily acts as a tRNA acetyltransferase. Involved in neurogenesis: regulates the migration and branching of projection neurons in the developing cerebral cortex, through a process depending on alpha-tubulin acetylation. Required for acetylation of GJA1 in the developing cerebral cortex. The chain is Elongator complex protein 3 from Homo sapiens (Human).